The primary structure comprises 658 residues: UvrABC system protein B (658 aa).

Positions 26-414 constitute a Helicase ATP-binding domain; sequence AGLKKGLKHQ…PDVIEQIIRP (389 aa). 39-46 is an ATP binding site; the sequence is GATGTGKT. The Beta-hairpin motif lies at 92 to 115; the sequence is YYDYYQPEAYVPQSDTYIEKDASI. Residues 430-592 enclose the Helicase C-terminal domain; it reads QIDDLMDEIN…ITPKTIRKEI (163 aa). Positions 622-658 constitute a UVR domain; the sequence is DIFIEGMEHEMKEAAKALDFERAAELRDALLEIKAEG.

This sequence belongs to the UvrB family. As to quaternary structure, forms a heterotetramer with UvrA during the search for lesions. Interacts with UvrC in an incision complex.

Its subcellular location is the cytoplasm. In terms of biological role, the UvrABC repair system catalyzes the recognition and processing of DNA lesions. A damage recognition complex composed of 2 UvrA and 2 UvrB subunits scans DNA for abnormalities. Upon binding of the UvrA(2)B(2) complex to a putative damaged site, the DNA wraps around one UvrB monomer. DNA wrap is dependent on ATP binding by UvrB and probably causes local melting of the DNA helix, facilitating insertion of UvrB beta-hairpin between the DNA strands. Then UvrB probes one DNA strand for the presence of a lesion. If a lesion is found the UvrA subunits dissociate and the UvrB-DNA preincision complex is formed. This complex is subsequently bound by UvrC and the second UvrB is released. If no lesion is found, the DNA wraps around the other UvrB subunit that will check the other stand for damage. The protein is UvrABC system protein B of Listeria innocua serovar 6a (strain ATCC BAA-680 / CLIP 11262).